The chain runs to 226 residues: Ribonuclease 3 (226 aa).

Residues 7-129 (LPRLCRTLGY…IIGAVYLDAD (123 aa)) form the RNase III domain. E42 contacts Mg(2+). D46 is a catalytic residue. 2 residues coordinate Mg(2+): D115 and E118. Residue E118 is part of the active site. The DRBM domain maps to 156–226 (DAKTLLQEYL…AAQVLELLNQ (71 aa)).

Belongs to the ribonuclease III family. Homodimer. Requires Mg(2+) as cofactor.

It is found in the cytoplasm. The catalysed reaction is Endonucleolytic cleavage to 5'-phosphomonoester.. In terms of biological role, digests double-stranded RNA. Involved in the processing of primary rRNA transcript to yield the immediate precursors to the large and small rRNAs (23S and 16S). Processes some mRNAs, and tRNAs when they are encoded in the rRNA operon. Processes pre-crRNA and tracrRNA of type II CRISPR loci if present in the organism. This chain is Ribonuclease 3, found in Shewanella amazonensis (strain ATCC BAA-1098 / SB2B).